The sequence spans 432 residues: D-amino acid dehydrogenase (432 aa).

3 to 17 (VVVLGSGVVGVTSAW) serves as a coordination point for FAD.

Belongs to the DadA oxidoreductase family. The cofactor is FAD.

The enzyme catalyses a D-alpha-amino acid + A + H2O = a 2-oxocarboxylate + AH2 + NH4(+). It functions in the pathway amino-acid degradation; D-alanine degradation; NH(3) and pyruvate from D-alanine: step 1/1. Functionally, oxidative deamination of D-amino acids. The polypeptide is D-amino acid dehydrogenase (Enterobacter sp. (strain 638)).